The primary structure comprises 87 residues: MDQLNVKEQQEFQQIVEQKQMKDFMNLYSNLVSRCFDDCVNDFTSNSLTSKETSCIAKCSEKFLKHSERVGQRFQEQNALLMQQGPK.

Residues 35–59 (CFDDCVNDFTSNSLTSKETSCIAKC) carry the Twin CX3C motif motif. Cystine bridges form between Cys35-Cys59 and Cys39-Cys55.

Belongs to the small Tim family. In terms of assembly, heterohexamer; composed of 3 copies of TIM9 and 3 copies of TIM10, named soluble 70 kDa complex. Associates with the TIM22 complex, whose core is composed of TIM22 and TIM54. Interacts with the transmembrane regions of multi-pass transmembrane proteins in transit.

It localises to the mitochondrion inner membrane. Its function is as follows. Mitochondrial intermembrane chaperone that participates in the import and insertion of multi-pass transmembrane proteins into the mitochondrial inner membrane. Also required for the transfer of beta-barrel precursors from the TOM complex to the sorting and assembly machinery (SAM complex) of the outer membrane. Acts as a chaperone-like protein that protects the hydrophobic precursors from aggregation and guide them through the mitochondrial intermembrane space. This is Mitochondrial import inner membrane translocase subunit TIM9 (TIM9) from Candida albicans (strain SC5314 / ATCC MYA-2876) (Yeast).